The chain runs to 320 residues: Olfactory receptor 2C3 (320 aa).

Over 1-26 (MMEIANVSSPEVFVLLGFSTRPSLET) the chain is Extracellular. Asn-6 carries an N-linked (GlcNAc...) asparagine glycan. Residues 27–50 (VLFIVVLSFYMVSILGNGIIILVS) form a helical membrane-spanning segment. The Cytoplasmic portion of the chain corresponds to 51–58 (HTDVHLHT). A helical membrane pass occupies residues 59 to 80 (PMYFFLANLPFLDMSFTTSIVP). Topologically, residues 81–101 (QLLANLWGPQKTISYGGCVVQ) are extracellular. Cys-98 and Cys-190 are joined by a disulfide. A helical membrane pass occupies residues 102-121 (FYISHWLGATECVLLATMSY). Residues 122-140 (DRYAAICRPLHYTVIMHPQ) are Cytoplasmic-facing. The helical transmembrane segment at 141-159 (LCLGLALASWLGGLTTSMV) threads the bilayer. Over 160 to 196 (GSTLTMLLPLCGNNCIDHFFCEMPLIMQLACVDTSLN) the chain is Extracellular. The chain crosses the membrane as a helical span at residues 197–220 (EMEMYLASFVFVVLPLGLILVSYG). Residues 221-237 (HIARAVLKIRSAEGRRK) are Cytoplasmic-facing. Residues 238–260 (AFNTCSSHVAVVSLFYGSIIFMY) traverse the membrane as a helical segment. Residues 261-273 (LQPAKSTSHEQGK) lie on the Extracellular side of the membrane. A helical membrane pass occupies residues 274-293 (FIALFYTVVTPALNPLIYTL). The Cytoplasmic segment spans residues 294–320 (RNTEVKSALRHMVLENCCGSAGKLAQI).

This sequence belongs to the G-protein coupled receptor 1 family.

Its subcellular location is the cell membrane. Its function is as follows. Odorant receptor. The chain is Olfactory receptor 2C3 (OR2C3) from Homo sapiens (Human).